Consider the following 148-residue polypeptide: Puroindoline-B (148 aa).

The first 19 residues, 1–19 (MKTLFLLALLALVASTTFA), serve as a signal peptide directing secretion. The propeptide occupies 20-29 (QYSEVGGWYN).

Post-translationally, five disulfide bonds are present. In terms of tissue distribution, endosperm and aleurone layer of developing kernels. In the aleurone layer, mainly localized to starch granules and the surface of the plasma membrane, forming a uniform layer, also abundant in the intercellular space. In the endosperm, mainly localized to starch granules and the plasma membrane, but less abundant in the intercellular space. Not found in roots or coleoptiles.

Its subcellular location is the membrane. The protein resides in the secreted. The protein localises to the extracellular space. Functionally, acts as a membranotoxin, probably through its antibacterial and antifungal activities, contributing to the defense mechanism of the plant against predators. Forms monovalent cation-selective ion channels in membranes. Has antibacterial activity against the Gram-positive bacteria S.aureus and C.michiganensis, and the Gram-negative bacteria E.coli, P.syringae pv phaseoli, A.tumefaciens and E.carotovora subsp carotovora. Acts synergistically with PINA against bacteria. Contributes to grain texture and hardness. The sequence is that of Puroindoline-B (PINB) from Triticum aestivum (Wheat).